The following is a 203-amino-acid chain: Probable nicotinate-nucleotide adenylyltransferase (203 aa).

Belongs to the NadD family.

The enzyme catalyses nicotinate beta-D-ribonucleotide + ATP + H(+) = deamido-NAD(+) + diphosphate. It functions in the pathway cofactor biosynthesis; NAD(+) biosynthesis; deamido-NAD(+) from nicotinate D-ribonucleotide: step 1/1. Functionally, catalyzes the reversible adenylation of nicotinate mononucleotide (NaMN) to nicotinic acid adenine dinucleotide (NaAD). The sequence is that of Probable nicotinate-nucleotide adenylyltransferase from Dictyoglomus turgidum (strain DSM 6724 / Z-1310).